Here is a 539-residue protein sequence, read N- to C-terminus: Alpha-aminoadipic semialdehyde dehydrogenase (539 aa).

Residues 1–26 constitute a mitochondrion transit peptide; it reads MWRVPRRLCVQSVKTSKLSGPWSRPA. 3 positions are modified to N6-acetyllysine; alternate: lysine 86, lysine 94, and lysine 97. N6-succinyllysine; alternate occurs at positions 86, 94, and 97. NAD(+) contacts are provided by residues 192–194, lysine 218, 258–259, 274–275, 274–279, and 296–297; these read TAF, GT, GS, GSTQVG, and EL. Glutamate 296 functions as the Proton acceptor in the catalytic mechanism. Residue cysteine 330 is the Nucleophile of the active site. (S)-2-amino-6-oxohexanoate is bound at residue threonine 331. Glutamate 427 contacts NAD(+). Lysine 462 is subject to N6-acetyllysine. 2 residues coordinate (S)-2-amino-6-oxohexanoate: glycine 489 and alanine 490. Residue lysine 500 is modified to N6-acetyllysine. Lysine 537 is modified (N6-succinyllysine).

Belongs to the aldehyde dehydrogenase family. Homotetramer. Present in liver, kidney, brain and pancreas, and at lower levels in jejunum, duodenum, stomach and testes (at protein level).

The protein localises to the cytoplasm. It is found in the cytosol. The protein resides in the nucleus. Its subcellular location is the mitochondrion. It catalyses the reaction nonanal + NAD(+) + H2O = nonanoate + NADH + 2 H(+). The catalysed reaction is (S)-2-amino-6-oxohexanoate + NAD(+) + H2O = L-2-aminoadipate + NADH + 2 H(+). It carries out the reaction betaine aldehyde + NAD(+) + H2O = glycine betaine + NADH + 2 H(+). The enzyme catalyses an aldehyde + NAD(+) + H2O = a carboxylate + NADH + 2 H(+). It catalyses the reaction hexanal + NAD(+) + H2O = hexanoate + NADH + 2 H(+). The catalysed reaction is octanal + NAD(+) + H2O = octanoate + NADH + 2 H(+). It carries out the reaction (E)-non-2-enal + NAD(+) + H2O = (E)-non-2-enoate + NADH + 2 H(+). The enzyme catalyses (E)-4-hydroxynon-2-enal + NAD(+) + H2O = (E)-4-hydroxynon-2-enoate + NADH + 2 H(+). The protein operates within amine and polyamine biosynthesis; betaine biosynthesis via choline pathway; betaine from betaine aldehyde: step 1/1. Multifunctional enzyme mediating important protective effects. Metabolizes betaine aldehyde to betaine, an important cellular osmolyte and methyl donor. Protects cells from oxidative stress by metabolizing a number of lipid peroxidation-derived aldehydes. Involved in lysine catabolism. This chain is Alpha-aminoadipic semialdehyde dehydrogenase, found in Mus musculus (Mouse).